Here is a 1662-residue protein sequence, read N- to C-terminus: ABC transporter A family member 5 (1662 aa).

A run of 7 helical transmembrane segments spans residues 30 to 50 (IVFP…VQLF), 242 to 262 (SVFV…ELVV), 284 to 304 (ISWI…IIVI), 317 to 337 (IIVI…AFIF), 346 to 366 (FAGL…IFIG), 377 to 397 (LLLC…IMSI), and 417 to 437 (QIIG…WYLD). Residues 505-739 (ISIRNLRKEF…YGVGYLLTCS (235 aa)) enclose the ABC transporter 1 domain. An ATP-binding site is contributed by 541–548 (GPNGSGKS). Transmembrane regions (helical) follow at residues 872–892 (FKAF…SIIV), 1052–1072 (IVYF…SFAG), 1102–1122 (LWDY…LAIV), 1130–1150 (FGLF…LSYL), 1163–1183 (GAIT…MIIL), 1201–1221 (IIDI…VIFI), and 1246–1266 (STPI…ILLI). Positions 1322-1557 (LQYKGLHKLF…FGAGYSVEVK (236 aa)) constitute an ABC transporter 2 domain. 1360 to 1367 (GLNGAGKT) is an ATP binding site.

This sequence belongs to the ABC transporter superfamily. ABCA family.

The protein resides in the membrane. The sequence is that of ABC transporter A family member 5 (abcA5) from Dictyostelium discoideum (Social amoeba).